A 167-amino-acid polypeptide reads, in one-letter code: Peptide deformylase (167 aa).

Fe cation-binding residues include Cys-91 and His-133. The active site involves Glu-134. His-137 lines the Fe cation pocket.

Belongs to the polypeptide deformylase family. The cofactor is Fe(2+).

It catalyses the reaction N-terminal N-formyl-L-methionyl-[peptide] + H2O = N-terminal L-methionyl-[peptide] + formate. In terms of biological role, removes the formyl group from the N-terminal Met of newly synthesized proteins. Requires at least a dipeptide for an efficient rate of reaction. N-terminal L-methionine is a prerequisite for activity but the enzyme has broad specificity at other positions. This is Peptide deformylase from Pseudoalteromonas translucida (strain TAC 125).